The following is a 594-amino-acid chain: TOX high mobility group box family member 4-B (594 aa).

2 disordered regions span residues 160 to 225 (GTIL…PQKP) and 522 to 545 (ESPP…SPQC). The segment covering 207–217 (KPKTPKKKKKK) has biased composition (basic residues). The short motif at 212–217 (KKKKKK) is the Nuclear localization signal element. The segment at residues 222-290 (PQKPLSAYAL…EYLKALALYK (69 aa)) is a DNA-binding region (HMG box).

In terms of assembly, component of the PNUTS-PP1 phosphatase complex.

Its subcellular location is the nucleus. It is found in the chromosome. Its function is as follows. Transcription factor that modulates cell fate reprogramming from the somatic state to the pluripotent and neuronal fate. Also acts as a regulatory component of protein phosphatase 1 (PP1) complexes. Component of the PNUTS-PP1 protein phosphatase complex, a PP1 complex that regulates RNA polymerase II transcription pause-release. PNUTS-PP1 also plays a role in the control of chromatin structure and cell cycle progression during the transition from mitosis into interphase. The protein is TOX high mobility group box family member 4-B (tox4-b) of Xenopus laevis (African clawed frog).